Reading from the N-terminus, the 211-residue chain is Protein-methionine-sulfoxide reductase heme-binding subunit MsrQ (211 aa).

Helical transmembrane passes span 8–28, 54–74, 82–102, 116–136, 153–173, and 178–198; these read VIWLKVCLHLAGLLPFLWLVW, FLLAALLITPLARYAKQPLLI, LWCFAWATLHLTSYALLELGV, PYLTLGIISWVILLALAFTST, FVYLVAILAPIHYLWSVKIIS, and IYAGLAVLLLALRYKKLLSLF.

The protein belongs to the MsrQ family. Heterodimer of a catalytic subunit (MsrP) and a heme-binding subunit (MsrQ). The cofactor is FMN. Heme b serves as cofactor.

The protein resides in the cell inner membrane. Functionally, part of the MsrPQ system that repairs oxidized periplasmic proteins containing methionine sulfoxide residues (Met-O), using respiratory chain electrons. Thus protects these proteins from oxidative-stress damage caused by reactive species of oxygen and chlorine generated by the host defense mechanisms. MsrPQ is essential for the maintenance of envelope integrity under bleach stress, rescuing a wide series of structurally unrelated periplasmic proteins from methionine oxidation, including the primary periplasmic chaperone SurA and the lipoprotein Pal. MsrQ provides electrons for reduction to the reductase catalytic subunit MsrP, using the quinone pool of the respiratory chain. The polypeptide is Protein-methionine-sulfoxide reductase heme-binding subunit MsrQ (Shigella flexneri).